The following is a 164-amino-acid chain: Succinate dehydrogenase assembly factor 3, mitochondrial (164 aa).

Residues 1–51 (MRPTLLRLANASGPLPLSVSQASVQLIPPIPLYRRLLRAHRLLPVDMRYMG) constitute a mitochondrion transit peptide. The span at 136-145 (KSPEQIEREA) shows a compositional bias: basic and acidic residues. The interval 136 to 164 (KSPEQIEREANSAGVSPVNPNDPTTAGNS) is disordered. A compositionally biased stretch (polar residues) spans 153 to 164 (VNPNDPTTAGNS).

Belongs to the complex I LYR family. SDHAF3 subfamily. As to quaternary structure, interacts with the iron-sulfur protein subunit within the SDH catalytic dimer.

Its subcellular location is the mitochondrion matrix. Plays an essential role in the assembly of succinate dehydrogenase (SDH), an enzyme complex (also referred to as respiratory complex II) that is a component of both the tricarboxylic acid (TCA) cycle and the mitochondrial electron transport chain, and which couples the oxidation of succinate to fumarate with the reduction of ubiquinone (coenzyme Q) to ubiquinol. Promotes maturation of the iron-sulfur protein subunit of the SDH catalytic dimer, protecting it from the deleterious effects of oxidants. May act together with SDHAF1. The sequence is that of Succinate dehydrogenase assembly factor 3, mitochondrial from Cryptococcus neoformans var. neoformans serotype D (strain B-3501A) (Filobasidiella neoformans).